A 641-amino-acid polypeptide reads, in one-letter code: Calpain-6 (641 aa).

Residues Leu26–Val343 enclose the Calpain catalytic domain. Residues Asn344–Arg495 form a domain III region. Residues Thr498–Ala621 enclose the C2 domain.

The protein belongs to the peptidase C2 family. In terms of assembly, interacts (via domain III) with microtubules. Interacts (via domain II) with ARHGEF2 (via the N-terminal zinc finger).

The protein resides in the cytoplasm. It localises to the perinuclear region. Its subcellular location is the cytoskeleton. The protein localises to the spindle. In terms of biological role, microtubule-stabilizing protein that may be involved in the regulation of microtubule dynamics and cytoskeletal organization. May act as a regulator of RAC1 activity through interaction with ARHGEF2 to control lamellipodial formation and cell mobility. Does not seem to have protease activity as it has lost the active site residues. This Mus musculus (Mouse) protein is Calpain-6 (Capn6).